Consider the following 118-residue polypeptide: MAAINKTKGSADRIKMKIRKGDTVQVISGKDKGKTGEVLKTLPYENRVLVQGINQRTKHVKPSQEGETGRIETKEFPLHASNVMIYSTKEKVASKVEIFVDKDGSKKRRLKKTGELID.

This sequence belongs to the universal ribosomal protein uL24 family. In terms of assembly, part of the 50S ribosomal subunit.

Functionally, one of two assembly initiator proteins, it binds directly to the 5'-end of the 23S rRNA, where it nucleates assembly of the 50S subunit. Its function is as follows. One of the proteins that surrounds the polypeptide exit tunnel on the outside of the subunit. This Prochlorococcus marinus (strain NATL1A) protein is Large ribosomal subunit protein uL24.